An 855-amino-acid polypeptide reads, in one-letter code: MAAAAVGGRGERLSSSSPTAAAPQVDAGKYVRYTPEQVEALERVYTECPKPSSLRRQQLIRECPILSNIEPKQIKVWFQNRRCREKQRKEASRLQTVNRKLNAMNKLLMEENDRLQKQVSRLVYENGYMRTQLHNPSAATTDTSCESVVTSGQHHQQQNPAVLHPQRDANNPAGLLAIAEETLAEFMSKATGTAVEWVQMVGMKPGPDSIGIIAVSHNCSGVAARACGLVSLEPTKVAEILKDRPSWYRDCRCVDIIHVIPTGNGGTIELIYMQTYAPTTLAAPRDFWTLRYTSGLEDGSLVICERSLTQSTGGPSGPNTPNFIRAEVLPSGYLIRPCEGGGSMIYIVDHVDLDAWSVPEVLRPLYESPKILAQKMTIAALRHIRQIAHESSGEIPYGAGRQPAVFRTFSQRLSRGFNDAVSGFPDDGWSLLSSDGSEDITISVNSSPNKLVGSHVSPNPLFSTVGGGILCAKASMLLQNVPPALLVRFLREHRSEWADPGVDAYSAASLRASPYAVPGLRTSGFMGSQVILPLAHTLEHEEFLEVIRLEGHGFSHDEVLLSRDMYLLQLCSGVDENATSASAQLVFAPIDESFADDAPLLPSGFRVIPLDTKMDGPSATRTLDLASALEVGPGGASRASVEASGTCNRSVLTIAFQFSYENHLRESVAAMARSYVRAVMASVQRVAVAIAPSRLGPQIGMKHPPASPEALTLASWIGRSYRAHTGADIRWSDTEDADSPLALLWKHSDAILCCSLKPAPMFTFANNAGLDILETTLVNLQDISLEMILDDEGRKALCSEFPKIMQQGFTYLPGGVCKSSMGRQASYEQAVAWKVLSDDDAPHCLAFMLVNWTFM.

The interval 1–21 (MAAAAVGGRGERLSSSSPTAA) is disordered. Residues 26-89 (DAGKYVRYTP…NRRCREKQRK (64 aa)) constitute a DNA-binding region (homeobox). Residues 84–126 (REKQRKEASRLQTVNRKLNAMNKLLMEENDRLQKQVSRLVYEN) adopt a coiled-coil conformation. An START domain is found at 168–390 (DANNPAGLLA…LRHIRQIAHE (223 aa)).

Belongs to the HD-ZIP homeobox family. Class III subfamily. As to expression, expressed in seedlings, roots, stems, leaf sheaths and blades and panicles.

Its subcellular location is the nucleus. Its function is as follows. Probable transcription factor. The protein is Homeobox-leucine zipper protein HOX33 (HOX33) of Oryza sativa subsp. indica (Rice).